Reading from the N-terminus, the 247-residue chain is Ribonuclease PH (247 aa).

Phosphate-binding positions include Arg87 and 125–127 (GTR).

Belongs to the RNase PH family. As to quaternary structure, homohexameric ring arranged as a trimer of dimers.

It carries out the reaction tRNA(n+1) + phosphate = tRNA(n) + a ribonucleoside 5'-diphosphate. Its function is as follows. Phosphorolytic 3'-5' exoribonuclease that plays an important role in tRNA 3'-end maturation. Removes nucleotide residues following the 3'-CCA terminus of tRNAs; can also add nucleotides to the ends of RNA molecules by using nucleoside diphosphates as substrates, but this may not be physiologically important. Probably plays a role in initiation of 16S rRNA degradation (leading to ribosome degradation) during starvation. In Frankia casuarinae (strain DSM 45818 / CECT 9043 / HFP020203 / CcI3), this protein is Ribonuclease PH.